Reading from the N-terminus, the 157-residue chain is Putative pre-16S rRNA nuclease (157 aa).

The protein belongs to the YqgF nuclease family.

It is found in the cytoplasm. Functionally, could be a nuclease involved in processing of the 5'-end of pre-16S rRNA. The polypeptide is Putative pre-16S rRNA nuclease (Nitrosomonas eutropha (strain DSM 101675 / C91 / Nm57)).